Reading from the N-terminus, the 616-residue chain is Dihydroxy-acid dehydratase (616 aa).

Position 81 (aspartate 81) interacts with Mg(2+). A [2Fe-2S] cluster-binding site is contributed by cysteine 122. Mg(2+) is bound by residues aspartate 123 and lysine 124. Lysine 124 carries the N6-carboxylysine modification. [2Fe-2S] cluster is bound at residue cysteine 195. Glutamate 491 contributes to the Mg(2+) binding site. Catalysis depends on serine 517, which acts as the Proton acceptor.

This sequence belongs to the IlvD/Edd family. As to quaternary structure, homodimer. [2Fe-2S] cluster serves as cofactor. It depends on Mg(2+) as a cofactor.

The catalysed reaction is (2R)-2,3-dihydroxy-3-methylbutanoate = 3-methyl-2-oxobutanoate + H2O. The enzyme catalyses (2R,3R)-2,3-dihydroxy-3-methylpentanoate = (S)-3-methyl-2-oxopentanoate + H2O. It functions in the pathway amino-acid biosynthesis; L-isoleucine biosynthesis; L-isoleucine from 2-oxobutanoate: step 3/4. Its pathway is amino-acid biosynthesis; L-valine biosynthesis; L-valine from pyruvate: step 3/4. Functionally, functions in the biosynthesis of branched-chain amino acids. Catalyzes the dehydration of (2R,3R)-2,3-dihydroxy-3-methylpentanoate (2,3-dihydroxy-3-methylvalerate) into 2-oxo-3-methylpentanoate (2-oxo-3-methylvalerate) and of (2R)-2,3-dihydroxy-3-methylbutanoate (2,3-dihydroxyisovalerate) into 2-oxo-3-methylbutanoate (2-oxoisovalerate), the penultimate precursor to L-isoleucine and L-valine, respectively. This is Dihydroxy-acid dehydratase from Methylobacillus flagellatus (strain ATCC 51484 / DSM 6875 / VKM B-1610 / KT).